The sequence spans 69 residues: Conotoxin Eb6.21 (69 aa).

The first 17 residues, 1–17 (VLIIAVLFLTACQLTTA), serve as a signal peptide directing secretion. Positions 18-41 (ETYSRGRQKHRARRSTDKNSKWTR) are excised as a propeptide. 3 cysteine pairs are disulfide-bonded: C43–C57, C50–C61, and C56–C68.

This sequence belongs to the conotoxin O1 superfamily. Expressed by the venom duct.

Its subcellular location is the secreted. In Conus ebraeus (Hebrew cone), this protein is Conotoxin Eb6.21 (E1).